Reading from the N-terminus, the 225-residue chain is Glutathione S-transferase Mu 5 (225 aa).

The 88-residue stretch at 5–92 (KSMVLGYWDI…YIARKHNMCG (88 aa)) folds into the GST N-terminal domain. At serine 6 the chain carries Phosphoserine. Residues 11 to 12 (YW), 50 to 54 (WLDVK), 63 to 64 (NL), and 76 to 77 (QS) contribute to the glutathione site. In terms of domain architecture, GST C-terminal spans 94–212 (TEEEKIRVDI…QSDRCFKMPI (119 aa)). Tyrosine 120 provides a ligand contact to substrate.

Belongs to the GST superfamily. Mu family. In terms of assembly, homodimer. The N-terminus is blocked. In terms of tissue distribution, expressed in testis and brain. Very low expression in liver, kidney, heart and lung.

Its subcellular location is the cytoplasm. It carries out the reaction RX + glutathione = an S-substituted glutathione + a halide anion + H(+). Conjugation of reduced glutathione to a wide number of exogenous and endogenous hydrophobic electrophiles. The protein is Glutathione S-transferase Mu 5 (Gstm5) of Rattus norvegicus (Rat).